The chain runs to 169 residues: Eukaryotic translation initiation factor 5A-2 (169 aa).

Lys-64 carries the hypusine modification.

It belongs to the eIF-5A family. In terms of processing, lys-51 undergoes hypusination, a unique post-translational modification that consists in the addition of a butylamino group from spermidine to lysine side chain, leading to the formation of the unusual amino acid hypusine. eIF-5As are the only known proteins to undergo this modification, which is essential for their function.

It is found in the cytoplasm. It localises to the nucleus. Functionally, translation factor that promotes translation elongation and termination, particularly upon ribosome stalling at specific amino acid sequence contexts. Binds between the exit (E) and peptidyl (P) site of the ribosome and promotes rescue of stalled ribosome: specifically required for efficient translation of polyproline-containing peptides as well as other motifs that stall the ribosome. Acts as a ribosome quality control (RQC) cofactor by joining the RQC complex to facilitate peptidyl transfer during CAT tailing step. In Schizosaccharomyces pombe (strain 972 / ATCC 24843) (Fission yeast), this protein is Eukaryotic translation initiation factor 5A-2 (tif51b).